The following is a 687-amino-acid chain: Glycine--tRNA ligase beta subunit (687 aa).

Belongs to the class-II aminoacyl-tRNA synthetase family. Tetramer of two alpha and two beta subunits.

It is found in the cytoplasm. It carries out the reaction tRNA(Gly) + glycine + ATP = glycyl-tRNA(Gly) + AMP + diphosphate. This is Glycine--tRNA ligase beta subunit from Geotalea daltonii (strain DSM 22248 / JCM 15807 / FRC-32) (Geobacter daltonii).